Here is a 403-residue protein sequence, read N- to C-terminus: Putative F-box/LRR-repeat protein At5g38386 (403 aa).

The 47-residue stretch at 1–47 (MDHLSNLPDELLCHIMSFLTTKEAALISVLSKRWRNLIAFVPNLDIF) folds into the F-box domain. LRR repeat units lie at residues 64 to 91 (IRQL…SLCC), 93 to 119 (GGSY…DLSM), 131 to 156 (VFEN…VMNH), 175 to 203 (LKTL…SYSD), 243 to 274 (YLYF…SIKS), and 275 to 300 (VESR…VLEA).

The polypeptide is Putative F-box/LRR-repeat protein At5g38386 (Arabidopsis thaliana (Mouse-ear cress)).